The sequence spans 1225 residues: DNA-directed RNA polymerase subunit beta' (1225 aa).

Residues Cys-60, Cys-62, Cys-75, and Cys-78 each contribute to the Zn(2+) site. Mg(2+)-binding residues include Asp-450, Asp-452, and Asp-454. Zn(2+) contacts are provided by Cys-818, Cys-892, Cys-899, and Cys-902.

It belongs to the RNA polymerase beta' chain family. The RNAP catalytic core consists of 2 alpha, 1 beta, 1 beta' and 1 omega subunit. When a sigma factor is associated with the core the holoenzyme is formed, which can initiate transcription. Mg(2+) is required as a cofactor. The cofactor is Zn(2+).

The enzyme catalyses RNA(n) + a ribonucleoside 5'-triphosphate = RNA(n+1) + diphosphate. Its function is as follows. DNA-dependent RNA polymerase catalyzes the transcription of DNA into RNA using the four ribonucleoside triphosphates as substrates. This chain is DNA-directed RNA polymerase subunit beta', found in Streptococcus pneumoniae (strain ATCC BAA-255 / R6).